The chain runs to 357 residues: Naringenin,2-oxoglutarate 3-dioxygenase (357 aa).

One can recognise a Fe2OG dioxygenase domain in the interval 189–293; that stretch reads CVDMDQKIVV…RLSIATFQNP (105 aa). Positions 216, 218, and 274 each coordinate Fe cation. A 2-oxoglutarate-binding site is contributed by arginine 284.

The protein belongs to the iron/ascorbate-dependent oxidoreductase family. Fe(2+) is required as a cofactor. L-ascorbate serves as cofactor.

It carries out the reaction a (2S)-flavan-4-one + 2-oxoglutarate + O2 = a (2R,3R)-dihydroflavonol + succinate + CO2. The protein operates within secondary metabolite biosynthesis; flavonoid biosynthesis. Catalyzes the 3-beta-hydroxylation of 2S-flavanones to 2R,3R-dihydroflavonols which are intermediates in the biosynthesis of flavonols, anthocyanidins, catechins and proanthocyanidins in plants. This is Naringenin,2-oxoglutarate 3-dioxygenase (FHT) from Matthiola incana (Common stock).